A 128-amino-acid chain; its full sequence is Fluoride-specific ion channel FluC (128 aa).

The next 4 membrane-spanning stretches (helical) occupy residues 5–25 (IVAI…LSLA), 35–55 (LGTL…AVVF), 67–87 (LFVI…SVEV), and 96–116 (FGWA…LTAL). Residues Gly75 and Thr78 each coordinate Na(+).

The protein belongs to the fluoride channel Fluc/FEX (TC 1.A.43) family.

It is found in the cell inner membrane. The catalysed reaction is fluoride(in) = fluoride(out). Its activity is regulated as follows. Na(+) is not transported, but it plays an essential structural role and its presence is essential for fluoride channel function. Fluoride-specific ion channel. Important for reducing fluoride concentration in the cell, thus reducing its toxicity. The chain is Fluoride-specific ion channel FluC from Burkholderia cenocepacia (strain HI2424).